Here is a 161-residue protein sequence, read N- to C-terminus: Bacterial E2-like ubiquitin protein BilB (161 aa).

Residue cysteine 113 is the Glycyl thioester intermediate of the active site.

Component of the Bil (bacterial ISG15-like) antiviral defense system, composed of BilA, BilB, BilC and BilD. The Bil system specifically conjugates a ubiquitin-like moiety (bilA) to the bacteriophage central tail fiber (CTF, or tip attachment protein J) via reactions involving E1 (bilD) and E2 (bilB). Modifies CTF of phage SECphi27 and SECphi4, which probably interferes with assembly of the phage tail. Also modifies T5 baseplate hub protein pb3 (gene D16), but not gp27 of phage T6 (Bil defends against T6). BilB probably accepts ubiquitin from the BilA-BilD (E1) complex and catalyzes its covalent attachment to target protein (CTF). Bil-encoding bacteria produce mostly defective phage SECphi27, many of which have phage assembly defects, including no tails. SECphi27 phage progeny produced in E.coli with the Bil system inject less DNA into naive host cells, maybe because the phage are less able to adsorb and inject their DNA into host cells. Functionally, expression of the Bil system in E.coli (strain MG1655) confers about 100-fold resistance to phage SECphi27, SECphi18, SECphi6, SECphi4 and T5, but not to SECphi17. When cells expressing the Bil system are infected by phage SECphi27 at low multiplicity of infection (0.03 MOI) the culture survives, at 3.0 MOI the culture collapses at the same time as cells without the Bil system. This Collimonas sp. (strain OK412) protein is Bacterial E2-like ubiquitin protein BilB.